Reading from the N-terminus, the 426-residue chain is Testicular acid phosphatase (426 aa).

Residues 1–26 (MAGLGFWGHPAGPLLLLLLLVLPPRA) form the signal peptide. Topologically, residues 27 to 393 (LPEGPLVFVA…AAIPPAPVVP (367 aa)) are extracellular. Histidine 41 (nucleophile) is an active-site residue. Disulfide bonds link cysteine 159/cysteine 378, cysteine 214/cysteine 312, and cysteine 353/cysteine 357. Residues asparagine 191 and asparagine 269 are each glycosylated (N-linked (GlcNAc...) asparagine). The Proton donor role is filled by aspartate 289. Residues asparagine 330 and asparagine 339 are each glycosylated (N-linked (GlcNAc...) asparagine). The chain crosses the membrane as a helical span at residues 394 to 414 (LLAGAVAVLVALSLGLGLLAW). Residues 415–426 (RPGCLRALGGPV) are Cytoplasmic-facing.

Belongs to the histidine acid phosphatase family. In terms of assembly, homodimer. Glycosylated. In terms of tissue distribution, expressed mainly in the testis. Also expressed in the brain where they are enriched at the postsynaptic sites. Expressed at lower levels in the trachea, prostate, bone marrow, spinal cord, colon, fetal brain, heart, thymus, fetal liver, spleen, leukocytes, ovary, small intestine, pancreas and skeletal muscle. Expression is significantly lower in testicular cancer tissues than in normal testicular tissues. Isoform 3 is expressed in the testis, trachea, prostate and bone marrow.

It localises to the membrane. The catalysed reaction is a phosphate monoester + H2O = an alcohol + phosphate. In terms of biological role, may dephosphorylate receptor tyrosine-protein kinase ERBB4 and inhibits its ligand-induced proteolytic cleavage. May play a role in odontogenesis. This Homo sapiens (Human) protein is Testicular acid phosphatase.